A 216-amino-acid chain; its full sequence is Putative F-box protein At2g03610 (216 aa).

In terms of domain architecture, F-box spans 19-69 (NQDWSKLCPDLLRPILESLSSIDFHRAKTVCSDWYSVWKTCKGYDSKWNQN).

This Arabidopsis thaliana (Mouse-ear cress) protein is Putative F-box protein At2g03610.